A 69-amino-acid chain; its full sequence is Sec-independent protein translocase protein TatA (69 aa).

A helical transmembrane segment spans residues M1 to G21. The segment at N44 to A69 is disordered.

The protein belongs to the TatA/E family. As to quaternary structure, the Tat system comprises two distinct complexes: a TatABC complex, containing multiple copies of TatA, TatB and TatC subunits, and a separate TatA complex, containing only TatA subunits. Substrates initially bind to the TatABC complex, which probably triggers association of the separate TatA complex to form the active translocon.

Its subcellular location is the cell inner membrane. Its function is as follows. Part of the twin-arginine translocation (Tat) system that transports large folded proteins containing a characteristic twin-arginine motif in their signal peptide across membranes. TatA could form the protein-conducting channel of the Tat system. This chain is Sec-independent protein translocase protein TatA, found in Magnetococcus marinus (strain ATCC BAA-1437 / JCM 17883 / MC-1).